A 46-amino-acid polypeptide reads, in one-letter code: Photosystem II reaction center protein Psb30 (46 aa).

Methionine 1 carries the post-translational modification N-formylmethionine. Topologically, residues 1–20 are lumenal; sequence MGIFNGIIEFLSNINFEVIA. A helical membrane pass occupies residues 21–38; the sequence is QLTMIAMIGIAGPMIIFL. Over 39 to 46 the chain is Cytoplasmic; sequence LAVRRGNL.

It belongs to the Psb30/Ycf12 family. In terms of assembly, PSII is composed of 1 copy each of membrane proteins PsbA, PsbB, PsbC, PsbD, PsbE, PsbF, PsbH, PsbI, PsbJ, PsbK, PsbL, PsbM, PsbT, PsbX, PsbY, PsbZ, Psb30/Ycf12, peripheral proteins PsbO, CyanoQ (PsbQ), PsbU, PsbV and a large number of cofactors. It forms dimeric complexes. Part of a photosystem II (PSII) assembly intermediate complex PSII-I; crystallized from a strain deleted of psbJ, it forms monomeric PSII before addition of the oxygen evolving complex. PSII-I includes 3 assembly factors not found in mature PSII (Psb27, Psb28 and Psb34). Requires PSII binds multiple chlorophylls, carotenoids and specific lipids. as cofactor.

The protein localises to the cellular thylakoid membrane. A core subunit of photosystem II (PSII). PSII is a light-driven water plastoquinone oxidoreductase, using light energy to abstract electrons from H(2)O, generating a proton gradient subsequently used for ATP formation. Helps stabilize PSII. This is Photosystem II reaction center protein Psb30 from Thermosynechococcus vestitus (strain NIES-2133 / IAM M-273 / BP-1).